A 529-amino-acid polypeptide reads, in one-letter code: Type I restriction enzyme EcoKI methylase subunit (529 aa).

S-adenosyl-L-methionine-binding positions include 148–153, 178–180, and Glu216; these read QYFTPR and TAG.

This sequence belongs to the N(4)/N(6)-methyltransferase family. The type I restriction/modification system is composed of three polypeptides R, M and S. The restriction enzyme has stoichiometry R(2)M(2)S(1). The methyltransferase is composed of M(2)S(1). As to quaternary structure, (Microbial infection) Interacts with Escherichia phage T7 protein Ocr; this interaction leads to the inhibition of the methyltransferase restriction enzyme M.EcoKI composed of M(2)S(1).

The enzyme catalyses a 2'-deoxyadenosine in DNA + S-adenosyl-L-methionine = an N(6)-methyl-2'-deoxyadenosine in DNA + S-adenosyl-L-homocysteine + H(+). Functionally, the subtype gamma methyltransferase (M) subunit of a type I restriction enzyme. The M and S subunits together form a methyltransferase (MTase) that methylates A-2 on the top and A-3 on the bottom strand of the sequence 5'-AACN(6)GTGC-3'. In the presence of the R subunit the complex can also act as an endonuclease, binding to the same target sequence but cutting the DNA some distance from this site. Whether the DNA is cut or modified depends on the methylation state of the target sequence. When the target site is unmodified, the DNA is cut. When the target site is hemimethylated, the complex acts as a maintenance MTase modifying the DNA so that both strands become methylated. After locating a non-methylated recognition site, the enzyme complex serves as a molecular motor that translocates DNA in an ATP-dependent manner until a collision occurs that triggers cleavage. The chain is Type I restriction enzyme EcoKI methylase subunit from Escherichia coli (strain K12).